The sequence spans 873 residues: Probable inorganic carbon transporter subunit DabA (873 aa).

Residues cysteine 393, aspartate 395, histidine 575, and cysteine 590 each coordinate Zn(2+).

It belongs to the inorganic carbon transporter (TC 9.A.2) DabA family. In terms of assembly, forms a complex with DabB. The cofactor is Zn(2+).

It is found in the cell membrane. Part of an energy-coupled inorganic carbon pump. The polypeptide is Probable inorganic carbon transporter subunit DabA (Bacillus licheniformis (strain ATCC 14580 / DSM 13 / JCM 2505 / CCUG 7422 / NBRC 12200 / NCIMB 9375 / NCTC 10341 / NRRL NRS-1264 / Gibson 46)).